The primary structure comprises 381 residues: Putative acyl-CoA dehydrogenase YdbM (381 aa).

Residues 158-160 and 337-341 each bind FAD; these read FTT and RIVGA.

The protein belongs to the acyl-CoA dehydrogenase family. FAD serves as cofactor.

This chain is Putative acyl-CoA dehydrogenase YdbM (ydbM), found in Bacillus subtilis (strain 168).